The following is a 142-amino-acid chain: Large ribosomal subunit protein uL13 (142 aa).

It belongs to the universal ribosomal protein uL13 family. In terms of assembly, part of the 50S ribosomal subunit.

In terms of biological role, this protein is one of the early assembly proteins of the 50S ribosomal subunit, although it is not seen to bind rRNA by itself. It is important during the early stages of 50S assembly. This Agathobacter rectalis (strain ATCC 33656 / DSM 3377 / JCM 17463 / KCTC 5835 / VPI 0990) (Eubacterium rectale) protein is Large ribosomal subunit protein uL13.